Consider the following 772-residue polypeptide: Alpha-xylosidase (772 aa).

The active-site Nucleophile is the Asp-416. Glu-419 is an active-site residue. The active-site Proton donor is the Asp-482.

The protein belongs to the glycosyl hydrolase 31 family. As to quaternary structure, homohexamer.

It catalyses the reaction Hydrolysis of terminal, non-reducing alpha-D-xylose residues with release of alpha-D-xylose.. In terms of biological role, can catalyze the transfer of alpha-xylosyl residue from alpha-xyloside to xylose, glucose, mannose, fructose, maltose, isomaltose, nigerose, kojibiose, sucrose and trehalose. The chain is Alpha-xylosidase (yicI) from Escherichia coli (strain K12).